The following is a 156-amino-acid chain: MAREVKLTKAGYERLMQQLERERERLQEATKILQELMESSDDYDDSGLEAAKQEKARIEARIDSLEDILSRAVILEEGSGEVIGLGSVVELEDPLSGERLSVQVVSPAEANVLDTPMKISDASPMGKALLGHRVGDVLSLDTPKGRREFRVVAIHG.

Positions 1 to 74 (MAREVKLTKA…LEDILSRAVI (74 aa)) form a coiled coil. Positions 20 and 24 each coordinate Zn(2+).

Belongs to the GreA/GreB family. In terms of assembly, interacts with RNAP.

Inhibits all catalytic activities of RNA polymerase (RNAP) by partially occluding its substrate-binding site and preventing NTP binding. The protein is Transcription inhibitor protein Gfh1 (gfh1) of Thermus thermophilus (strain ATCC 27634 / DSM 579 / HB8).